We begin with the raw amino-acid sequence, 62 residues long: Amolopin-p-MT1 (62 aa).

Residues 1–22 form the signal peptide; that stretch reads MFTLKKSLLLLFFLGTISLSLC. Positions 23 to 42 are cleaved as a propeptide — removed in mature form; sequence EQERGADEEENGGEVTEEEV.

This sequence belongs to the frog skin active peptide (FSAP) family. Brevinin subfamily. As to expression, expressed by the skin glands.

The protein localises to the secreted. Antimicrobial peptide. Active against a variety of Gram-negative and Gram-positive bacterial strains. Not active against fungi. Shows weak hemolytic activity against human erythrocytes. The sequence is that of Amolopin-p-MT1 from Amolops mantzorum (Sichuan torrent frog).